The primary structure comprises 695 residues: Polyribonucleotide nucleotidyltransferase (695 aa).

The Mg(2+) site is built by aspartate 488 and aspartate 494. The 60-residue stretch at 554–613 (PKTAVIKIQTDKIRDLIGKGGETIKGIISTSSASVDVDDNGNVNIFSNDQKSFDTAMQMV) folds into the KH domain. The region spanning 623–690 (GKVYTGKVVK…DRGRIKLSRK (68 aa)) is the S1 motif domain.

It belongs to the polyribonucleotide nucleotidyltransferase family. In terms of assembly, component of the RNA degradosome, which is a multiprotein complex involved in RNA processing and mRNA degradation. Mg(2+) serves as cofactor.

The protein resides in the cytoplasm. It catalyses the reaction RNA(n+1) + phosphate = RNA(n) + a ribonucleoside 5'-diphosphate. Its function is as follows. Involved in mRNA degradation. Catalyzes the phosphorolysis of single-stranded polyribonucleotides processively in the 3'- to 5'-direction. The chain is Polyribonucleotide nucleotidyltransferase from Ruthia magnifica subsp. Calyptogena magnifica.